The chain runs to 223 residues: Putative 3-methyladenine DNA glycosylase (223 aa).

It belongs to the DNA glycosylase MPG family.

The sequence is that of Putative 3-methyladenine DNA glycosylase from Pseudomonas syringae pv. tomato (strain ATCC BAA-871 / DC3000).